The chain runs to 1116 residues: Probable chitinase LysM11 (1116 aa).

The region spanning 233 to 283 is the LysM domain; it reads GTYTIQTNDNCAEIAAHFGVTQDDIYDLNEDTWGWAGCGTNDLKADQVICL. Residues 346–719 form the GH18 domain; that stretch reads FYHVAYFEVF…LGVDPDSDEA (374 aa). The active-site Proton donor is E466. Residues Y467 and W701 each coordinate chitin.

The protein belongs to the glycosyl hydrolase 18 family. Chitinase class V subfamily.

The enzyme catalyses Random endo-hydrolysis of N-acetyl-beta-D-glucosaminide (1-&gt;4)-beta-linkages in chitin and chitodextrins.. Probable chitinase involved in the degradation of chitin, a component of the cell walls of fungi and exoskeletal elements of some animals (including worms and arthropods). Might be involved in manipulation of host defenses for successful infection. In Penicillium expansum (Blue mold rot fungus), this protein is Probable chitinase LysM11.